The chain runs to 816 residues: MASSTSGIFFQGDDESQSFINSHLTSSYGNSSNSAPGCGGPTGGYHNLSMVSGDMHNPVMMSVSTPGPSAGASSLVTDANSGLSGGGPHLQRSASINNESYMRLPASPMSFSSNNISISGSSVVDGSTVVQRHDPSVQLGGSSATSLPTSQTNQIPLSMARRASESFFQDPNNLTQARKKPRLDSKQDDALQQQILRQWLQRQDILQQQQQQQQQGQNPQFQILLQQQKLRQQQQYLQSLPPLQRVQLQQQQQVQQQQQLQQQHQQQQQQLQQQGMQMQLTGGPRPYENSVCARRLMQYLYHQRQRPSESSIVYWRKFVTEYFSPRAKKRWCLSHYDNVGHSALGVSPQAATDEWQCDLCGSKSGRGFEATFDVLPRLNEIKFASGVLDELLYLGVPSERRYGSGIMVLEYGKAVQESVYEHIRVVREGHLRIIFSQELKILSWEFCTRRHEELLPRRLVAPQVNQLLQVAEKCQSTIDQSGSDGIHQQDLQANSNMVMAAGRQLAKSLESHSLNDLGFSKRYVRCLQISEVVSSMKDMIDFCRDQKVGPIEALKSYPYRMKAGKPQMQEMEQLAAARGLPPDRNSLNKLMALRNSGINIPMNNMSGQGSLPGSAQAAAFALTNYQSMLMKQNHLNSDLNNTTIQQEPSRNRSASPSYQGTSPLLPGFVHSPSISGVSSHLSPQRQMPSSSYNGSTQQYHQQPPSCSSGNQTLEQQMIHQIWQQMANSNGGSGQQQQSLSGQNMMNCNTNMGRNRTDYVPAAAETPSTSNRFRGIKGLDQSQNLEGIISNTSLNFGNNGVFSNEVDESMGGYSWKS.

Disordered stretches follow at residues 133–153 and 166–189; these read HDPS…SQTN and SFFQ…KQDD. 2 stretches are compositionally biased toward polar residues: residues 139–153 and 166–176; these read LGGS…SQTN and SFFQDPNNLTQ. The tract at residues 307–554 is dimerization; the sequence is PSESSIVYWR…DQKVGPIEAL (248 aa). Residues 316 to 330 carry the Nuclear localization signal motif; the sequence is RKFVTEYFSPRAKKR. Polar residues-rich tracts occupy residues 644 to 662 and 672 to 711; these read IQQE…QGTS and PSIS…SGNQ. The disordered stretch occupies residues 644 to 711; it reads IQQEPSRNRS…QPPSCSSGNQ (68 aa).

Belongs to the adn1/SEU family. As to quaternary structure, forms corepressor complexes with LUH; LUH is the transcription repressor subunit and SLK2 the specific DNA-binding adapters. Expressed in young flower meristems, ovules and the carpel margin meristem.

It localises to the nucleus. Functionally, probable transcription regulator that functions in the development of the carpel margin meristem similarly to SEUSS (SEU). In association with SEU, supports organ development from meristematic regions by facilitating auxin response and thus organ initiation, and by sustaining meristematic potential through the maintenance of PHABULOSA expression. DNA-binding adapter subunit of the SEU-SLK2 transcriptional corepressor of abiotic stress (e.g. salt and osmotic stress) response genes. The polypeptide is Probable transcriptional regulator SLK2 (SLK2) (Arabidopsis thaliana (Mouse-ear cress)).